The chain runs to 804 residues: Elongation factor G, mitochondrial (804 aa).

The N-terminal 63 residues, 1–63 (MSMHRVARAV…RHFFQSPIIR (63 aa)), are a transit peptide targeting the mitochondrion. Positions 99 to 385 (RRVRNIGIAA…AVCDYLPNPA (287 aa)) constitute a tr-type G domain. Residues 108 to 115 (AHIDSGKT), 183 to 187 (DTPGH), and 237 to 240 (NKMD) each bind GTP.

Belongs to the TRAFAC class translation factor GTPase superfamily. Classic translation factor GTPase family. EF-G/EF-2 subfamily.

The protein resides in the mitochondrion. It participates in protein biosynthesis; polypeptide chain elongation. Functionally, mitochondrial GTPase that catalyzes the GTP-dependent ribosomal translocation step during translation elongation. During this step, the ribosome changes from the pre-translocational (PRE) to the post-translocational (POST) state as the newly formed A-site-bound peptidyl-tRNA and P-site-bound deacylated tRNA move to the P and E sites, respectively. Catalyzes the coordinated movement of the two tRNA molecules, the mRNA and conformational changes in the ribosome. The chain is Elongation factor G, mitochondrial (mef1) from Sclerotinia sclerotiorum (strain ATCC 18683 / 1980 / Ss-1) (White mold).